Consider the following 123-residue polypeptide: Holo-[acyl-carrier-protein] synthase (123 aa).

Aspartate 8 and glutamate 60 together coordinate Mg(2+).

It belongs to the P-Pant transferase superfamily. AcpS family. Mg(2+) serves as cofactor.

Its subcellular location is the cytoplasm. It carries out the reaction apo-[ACP] + CoA = holo-[ACP] + adenosine 3',5'-bisphosphate + H(+). Its function is as follows. Transfers the 4'-phosphopantetheine moiety from coenzyme A to a Ser of acyl-carrier-protein. The protein is Holo-[acyl-carrier-protein] synthase of Ehrlichia ruminantium (strain Welgevonden).